The following is a 145-amino-acid chain: Antiholin-like protein LrgA (145 aa).

Transmembrane regions (helical) follow at residues 10–30, 33–53, 72–92, and 96–116; these read PAHF…SKII, FMPI…VLLC, NIGL…GVIS, and FLII…TGYV.

The protein belongs to the CidA/LrgA family. LrgA subfamily.

The protein localises to the cell membrane. In terms of biological role, inhibits the expression or activity of extracellular murein hydrolases by interacting, possibly with LrgB, with the holin-like proteins CidA and/or CidB. The LrgAB and CidAB proteins may affect the proton motive force of the membrane. May be involved in programmed cell death (PCD), possibly triggering PCD in response to antibiotics and environmental stresses. This Staphylococcus aureus (strain JH1) protein is Antiholin-like protein LrgA.